The sequence spans 206 residues: Dephospho-CoA kinase (206 aa).

A DPCK domain is found at 4 to 200 (IVALTGGIGS…AHYLQLASQF (197 aa)). 12-17 (GSGKST) provides a ligand contact to ATP.

It belongs to the CoaE family.

It localises to the cytoplasm. It carries out the reaction 3'-dephospho-CoA + ATP = ADP + CoA + H(+). The protein operates within cofactor biosynthesis; coenzyme A biosynthesis; CoA from (R)-pantothenate: step 5/5. In terms of biological role, catalyzes the phosphorylation of the 3'-hydroxyl group of dephosphocoenzyme A to form coenzyme A. The polypeptide is Dephospho-CoA kinase (Shigella flexneri).